The chain runs to 553 residues: Cysteine desulfurase IscS (553 aa).

Residues 102-122 (NNISSNNTQYNNNSSNSGSLN) are compositionally biased toward low complexity. Residues 102-125 (NNISSNNTQYNNNSSNSGSLNDEG) are disordered.

Belongs to the class-V pyridoxal-phosphate-dependent aminotransferase family. NifS/IscS subfamily. As to quaternary structure, homotetramer. Interacts with Isd11; the interaction enhances cysteine desulfurase activity of IscS. Interacts with IscU. Component of a complex, at least composed of IscS, Isd11 and IscU. The cofactor is pyridoxal 5'-phosphate.

It is found in the mitochondrion. The enzyme catalyses (sulfur carrier)-H + L-cysteine = (sulfur carrier)-SH + L-alanine. It functions in the pathway cofactor biosynthesis; iron-sulfur cluster biosynthesis. In terms of biological role, catalyzes sulfur activation and mobilization in iron-sulfur cluster formation (ISC) pathway for iron-sulfur (Fe-S) cluster biogenesis. Active when in complex with a partner protein Isd11. In Plasmodium falciparum (isolate 3D7), this protein is Cysteine desulfurase IscS.